Here is a 275-residue protein sequence, read N- to C-terminus: Polyamine aminopropyltransferase (275 aa).

The PABS domain maps to 2–235 (EFWFTEKQTE…GMWTFTIGSK (234 aa)). Gln31 lines the S-methyl-5'-thioadenosine pocket. Spermidine-binding residues include His62 and Asp86. S-methyl-5'-thioadenosine is bound by residues Asp106 and 137–138 (DG). Asp155 (proton acceptor) is an active-site residue. Residue 155-158 (DSTE) participates in spermidine binding. Pro162 contacts S-methyl-5'-thioadenosine.

Belongs to the spermidine/spermine synthase family. As to quaternary structure, homodimer or homotetramer.

The protein resides in the cytoplasm. The enzyme catalyses S-adenosyl 3-(methylsulfanyl)propylamine + putrescine = S-methyl-5'-thioadenosine + spermidine + H(+). It participates in amine and polyamine biosynthesis; spermidine biosynthesis; spermidine from putrescine: step 1/1. Its function is as follows. Catalyzes the irreversible transfer of a propylamine group from the amino donor S-adenosylmethioninamine (decarboxy-AdoMet) to putrescine (1,4-diaminobutane) to yield spermidine. The polypeptide is Polyamine aminopropyltransferase (Shouchella clausii (strain KSM-K16) (Alkalihalobacillus clausii)).